The chain runs to 183 residues: Ribosome rescue factor SmrB (183 aa).

In terms of domain architecture, Smr spans 98–173 (LDLHGLTQLQ…GDAALLVLIE (76 aa)).

Belongs to the SmrB family. In terms of assembly, associates with collided ribosomes, but not with correctly translating polysomes.

Its function is as follows. Acts as a ribosome collision sensor. Detects stalled/collided disomes (pairs of ribosomes where the leading ribosome is stalled and a second ribosome has collided with it) and endonucleolytically cleaves mRNA at the 5' boundary of the stalled ribosome. Stalled/collided disomes form a new interface (primarily via the 30S subunits) that binds SmrB. Cleaved mRNA becomes available for tmRNA ligation, leading to ribosomal subunit dissociation and rescue of stalled ribosomes. The chain is Ribosome rescue factor SmrB from Escherichia coli O157:H7.